The following is a 411-amino-acid chain: S-adenosylmethionine synthase (411 aa).

Residue histidine 15 coordinates ATP. Aspartate 17 serves as a coordination point for Mg(2+). Residue glutamate 43 coordinates K(+). L-methionine contacts are provided by glutamate 56 and glutamine 99. Residues 99 to 109 are flexible loop; sequence QSPDIAQGVDT. Residues 174–176, 247–248, aspartate 256, 262–263, alanine 279, and lysine 283 contribute to the ATP site; these read DGK, RF, and RK. L-methionine is bound at residue aspartate 256. Lysine 287 provides a ligand contact to L-methionine.

Belongs to the AdoMet synthase family. As to quaternary structure, homotetramer; dimer of dimers. Mg(2+) is required as a cofactor. K(+) serves as cofactor.

Its subcellular location is the cytoplasm. It carries out the reaction L-methionine + ATP + H2O = S-adenosyl-L-methionine + phosphate + diphosphate. It participates in amino-acid biosynthesis; S-adenosyl-L-methionine biosynthesis; S-adenosyl-L-methionine from L-methionine: step 1/1. Catalyzes the formation of S-adenosylmethionine (AdoMet) from methionine and ATP. The overall synthetic reaction is composed of two sequential steps, AdoMet formation and the subsequent tripolyphosphate hydrolysis which occurs prior to release of AdoMet from the enzyme. This Streptomyces spectabilis protein is S-adenosylmethionine synthase.